A 198-amino-acid chain; its full sequence is Guanylate kinase (198 aa).

Residues 6 to 192 (KSIVIFTGPS…AAQEIREILH (187 aa)) form the Guanylate kinase-like domain. Position 13-20 (13-20 (GPSGVGKG)) interacts with ATP.

It belongs to the guanylate kinase family.

The protein localises to the cytoplasm. The enzyme catalyses GMP + ATP = GDP + ADP. Its function is as follows. Essential for recycling GMP and indirectly, cGMP. The polypeptide is Guanylate kinase (Mycoplasmopsis synoviae (strain 53) (Mycoplasma synoviae)).